The following is a 443-amino-acid chain: Methyl-coenzyme M reductase I subunit beta (443 aa).

Tyr-367 provides a ligand contact to coenzyme M. Gly-369 is a binding site for coenzyme B.

It belongs to the methyl-coenzyme M reductase beta subunit family. MCR is a hexamer of two alpha, two beta, and two gamma chains, forming a dimer of heterotrimers. The cofactor is coenzyme F430.

It localises to the cytoplasm. It carries out the reaction coenzyme B + methyl-coenzyme M = methane + coenzyme M-coenzyme B heterodisulfide. It participates in one-carbon metabolism; methyl-coenzyme M reduction; methane from methyl-coenzyme M: step 1/1. Functionally, component of the methyl-coenzyme M reductase (MCR) I that catalyzes the reductive cleavage of methyl-coenzyme M (CoM-S-CH3 or 2-(methylthio)ethanesulfonate) using coenzyme B (CoB or 7-mercaptoheptanoylthreonine phosphate) as reductant which results in the production of methane and the mixed heterodisulfide of CoB and CoM (CoM-S-S-CoB). This is the final step in methanogenesis. The chain is Methyl-coenzyme M reductase I subunit beta (mcrB) from Methanothermobacter thermautotrophicus (strain ATCC 29096 / DSM 1053 / JCM 10044 / NBRC 100330 / Delta H) (Methanobacterium thermoautotrophicum).